The following is a 159-amino-acid chain: Allergen Arg r 1 (159 aa).

A signal peptide spans methionine 1 to alanine 16. Disulfide bonds link cysteine 50/cysteine 155 and cysteine 109/cysteine 134.

It belongs to the calycin superfamily. Histamine-binding salivary protein family. Post-translationally, not glycosylated.

Its subcellular location is the secreted. This is Allergen Arg r 1 from Argas reflexus (European pigeon tick).